The primary structure comprises 339 residues: 3-isopropylmalate dehydrogenase (339 aa).

Substrate contacts are provided by arginine 88, arginine 98, arginine 122, and aspartate 212. Mg(2+)-binding residues include aspartate 212, aspartate 236, and aspartate 240. 272 to 284 is an NAD(+) binding site; it reads GSAPDIAGKGIAD.

The protein belongs to the isocitrate and isopropylmalate dehydrogenases family. LeuB type 2 subfamily. Homodimer. Mg(2+) is required as a cofactor. Requires Mn(2+) as cofactor.

It localises to the cytoplasm. The catalysed reaction is (2R,3S)-3-isopropylmalate + NAD(+) = 4-methyl-2-oxopentanoate + CO2 + NADH. The protein operates within amino-acid biosynthesis; L-leucine biosynthesis; L-leucine from 3-methyl-2-oxobutanoate: step 3/4. Functionally, catalyzes the oxidation of 3-carboxy-2-hydroxy-4-methylpentanoate (3-isopropylmalate) to 3-carboxy-4-methyl-2-oxopentanoate. The product decarboxylates to 4-methyl-2 oxopentanoate. The chain is 3-isopropylmalate dehydrogenase from Corynebacterium aurimucosum (strain ATCC 700975 / DSM 44827 / CIP 107346 / CN-1) (Corynebacterium nigricans).